A 245-amino-acid chain; its full sequence is Protein DEHYDRATION-INDUCED 19 homolog 4 (245 aa).

Belongs to the Di19 family.

The sequence is that of Protein DEHYDRATION-INDUCED 19 homolog 4 (DI19-4) from Oryza sativa subsp. japonica (Rice).